The chain runs to 151 residues: Ribonuclease H (151 aa).

Residues 2 to 143 (SDDWVEIYTD…ADLLANRGVV (142 aa)) enclose the RNase H type-1 domain. The Mg(2+) site is built by Asp-11, Glu-49, Asp-71, and Asp-135.

It belongs to the RNase H family. As to quaternary structure, monomer. Mg(2+) is required as a cofactor.

Its subcellular location is the cytoplasm. It carries out the reaction Endonucleolytic cleavage to 5'-phosphomonoester.. Endonuclease that specifically degrades the RNA of RNA-DNA hybrids. This Stutzerimonas stutzeri (strain A1501) (Pseudomonas stutzeri) protein is Ribonuclease H.